A 67-amino-acid polypeptide reads, in one-letter code: Large ribosomal subunit protein uL30 (67 aa).

It belongs to the universal ribosomal protein uL30 family. As to quaternary structure, part of the 50S ribosomal subunit.

This Sinorhizobium medicae (strain WSM419) (Ensifer medicae) protein is Large ribosomal subunit protein uL30.